The chain runs to 311 residues: Putative dihydroorotate dehydrogenase A (fumarate) (311 aa).

Residues K45, 69–73, and N128 each bind substrate; that span reads NSMGL. 45-46 is an FMN binding site; it reads KT. N128 is an FMN binding site. C131 acts as the Nucleophile in catalysis. 2 residues coordinate FMN: K165 and V193. 194–195 is a substrate binding site; sequence NS. FMN-binding positions include G220, 248–249, and 270–271; these read GG and GT.

The protein belongs to the dihydroorotate dehydrogenase family. Type 1 subfamily. Homodimer. The cofactor is FMN.

The protein localises to the cytoplasm. It carries out the reaction (S)-dihydroorotate + fumarate = orotate + succinate. The protein operates within pyrimidine metabolism; UMP biosynthesis via de novo pathway. Catalyzes the conversion of dihydroorotate to orotate with fumarate as the electron acceptor. The sequence is that of Putative dihydroorotate dehydrogenase A (fumarate) (pyrD) from Streptococcus pyogenes serotype M5 (strain Manfredo).